The chain runs to 192 residues: Phosphoheptose isomerase (192 aa).

The 156-residue stretch at 37 to 192 (LADSFKAGGK…IQLIEKEMEK (156 aa)) folds into the SIS domain. Residue 52-54 (NGG) participates in substrate binding. Residues His-61 and Glu-65 each coordinate Zn(2+). Substrate contacts are provided by residues Glu-65, 93-94 (ND), 119-121 (STS), Ser-124, and Gln-172. Residues Gln-172 and His-180 each coordinate Zn(2+).

It belongs to the SIS family. GmhA subfamily. Homotetramer. Zn(2+) is required as a cofactor.

The protein localises to the cytoplasm. It carries out the reaction 2 D-sedoheptulose 7-phosphate = D-glycero-alpha-D-manno-heptose 7-phosphate + D-glycero-beta-D-manno-heptose 7-phosphate. The protein operates within carbohydrate biosynthesis; D-glycero-D-manno-heptose 7-phosphate biosynthesis; D-glycero-alpha-D-manno-heptose 7-phosphate and D-glycero-beta-D-manno-heptose 7-phosphate from sedoheptulose 7-phosphate: step 1/1. In terms of biological role, catalyzes the isomerization of sedoheptulose 7-phosphate in D-glycero-D-manno-heptose 7-phosphate. The polypeptide is Phosphoheptose isomerase (Proteus mirabilis (strain HI4320)).